A 348-amino-acid chain; its full sequence is Probable dual-specificity RNA methyltransferase RlmN (348 aa).

Glu93 acts as the Proton acceptor in catalysis. Positions 99–333 (TEKRLTACLS…VSLRKSRGSD (235 aa)) constitute a Radical SAM core domain. Residues Cys106 and Cys338 are joined by a disulfide bond. 3 residues coordinate [4Fe-4S] cluster: Cys113, Cys117, and Cys120. S-adenosyl-L-methionine contacts are provided by residues 160–161 (GE), Ser190, 219–221 (SLH), and Asn295. The active-site S-methylcysteine intermediate is the Cys338.

This sequence belongs to the radical SAM superfamily. RlmN family. It depends on [4Fe-4S] cluster as a cofactor.

Its subcellular location is the cytoplasm. It carries out the reaction adenosine(2503) in 23S rRNA + 2 reduced [2Fe-2S]-[ferredoxin] + 2 S-adenosyl-L-methionine = 2-methyladenosine(2503) in 23S rRNA + 5'-deoxyadenosine + L-methionine + 2 oxidized [2Fe-2S]-[ferredoxin] + S-adenosyl-L-homocysteine. The catalysed reaction is adenosine(37) in tRNA + 2 reduced [2Fe-2S]-[ferredoxin] + 2 S-adenosyl-L-methionine = 2-methyladenosine(37) in tRNA + 5'-deoxyadenosine + L-methionine + 2 oxidized [2Fe-2S]-[ferredoxin] + S-adenosyl-L-homocysteine. In terms of biological role, specifically methylates position 2 of adenine 2503 in 23S rRNA and position 2 of adenine 37 in tRNAs. The protein is Probable dual-specificity RNA methyltransferase RlmN of Prochlorococcus marinus (strain MIT 9515).